The chain runs to 364 residues: Homeobox protein Nkx-6.1 (364 aa).

The segment at 35 to 134 (LYPATYPPLP…SSSSSASATS (100 aa)) is disordered. Composition is skewed to low complexity over residues 48 to 92 (PSSS…LSAA) and 109 to 134 (ASGAALPSASPSGSSSSSSSSASATS). Residues 101-268 (LSRPSMPVAS…KYLAGPERAR (168 aa)) form a repressor domain region. Residue Arg-189 is modified to Asymmetric dimethylarginine. Residues 236–295 (RKHTRPTFSGQQIFALEKTFEQTKYLAGPERARLAYSLGMTESQVKVWFQNRRTKWRKKH) constitute a DNA-binding region (homeobox). Residues 294-364 (KHAAEMATAK…LHASEAEGSS (71 aa)) form a disordered region. The span at 304 to 317 (KKQDSETERLKGTS) shows a compositional bias: basic and acidic residues. Residues 306–364 (QDSETERLKGTSENEEEDDDYNKPLDPNSDDEKITQLLKKHKSSSGGLLLHASEAEGSS) are involved in DNA-binding.

As to expression, pancreatic beta cells.

Its subcellular location is the nucleus. Functionally, together with NKX2-2 and IRX3 acts to restrict the generation of motor neurons to the appropriate region of the neural tube. Belongs to the class II proteins of neuronal progenitor factors, which are induced by SHH signals. Transcription factor which binds to specific A/T-rich DNA sequences in the promoter regions of a number of genes. Involved in transcriptional regulation in islet beta cells. Binds to the insulin promoter and is involved in regulation of the insulin gene. The protein is Homeobox protein Nkx-6.1 (NKX6-1) of Mesocricetus auratus (Golden hamster).